We begin with the raw amino-acid sequence, 72 residues long: Translation initiation factor IF-1 (72 aa).

The S1-like domain occupies Met-1–Lys-72.

This sequence belongs to the IF-1 family. Component of the 30S ribosomal translation pre-initiation complex which assembles on the 30S ribosome in the order IF-2 and IF-3, IF-1 and N-formylmethionyl-tRNA(fMet); mRNA recruitment can occur at any time during PIC assembly.

The protein localises to the cytoplasm. Functionally, one of the essential components for the initiation of protein synthesis. Stabilizes the binding of IF-2 and IF-3 on the 30S subunit to which N-formylmethionyl-tRNA(fMet) subsequently binds. Helps modulate mRNA selection, yielding the 30S pre-initiation complex (PIC). Upon addition of the 50S ribosomal subunit IF-1, IF-2 and IF-3 are released leaving the mature 70S translation initiation complex. The chain is Translation initiation factor IF-1 from Clostridium kluyveri (strain ATCC 8527 / DSM 555 / NBRC 12016 / NCIMB 10680 / K1).